An 892-amino-acid chain; its full sequence is Alanine--tRNA ligase (892 aa).

Zn(2+) is bound by residues H580, H584, C682, and H686.

The protein belongs to the class-II aminoacyl-tRNA synthetase family. Requires Zn(2+) as cofactor.

The protein resides in the cytoplasm. The enzyme catalyses tRNA(Ala) + L-alanine + ATP = L-alanyl-tRNA(Ala) + AMP + diphosphate. In terms of biological role, catalyzes the attachment of alanine to tRNA(Ala) in a two-step reaction: alanine is first activated by ATP to form Ala-AMP and then transferred to the acceptor end of tRNA(Ala). Also edits incorrectly charged Ser-tRNA(Ala) and Gly-tRNA(Ala) via its editing domain. The protein is Alanine--tRNA ligase of Salinispora tropica (strain ATCC BAA-916 / DSM 44818 / JCM 13857 / NBRC 105044 / CNB-440).